Reading from the N-terminus, the 259-residue chain is MRKKQGRLTIVKQTEVARDSYELVLEGELVKHMSQPGQFLHVRVDESEDLLLRRPISIANIDPEKEQVTMIYRAGGAGTKRLAAQRVGTEVDVLGPLGQGFPLEEAKRGEEVLLVGGGIGVPPLYYLGRRLVENGARVTSVLGFASQADVFYEQPFKQLGNVHIATADGSYGAPGFVTDVISQQSLDFDVLYSCGPTPMLKALTARYRERRAFISLEERMGCGVGACFACVCHVENGQAHEYRKICTDGPVFPVGEVVL.

Residues 3-103 form the FAD-binding FR-type domain; it reads KKQGRLTIVK…LGPLGQGFPL (101 aa). Residues 54 to 57, 71 to 73, and 78 to 79 contribute to the FAD site; these read RPIS, IYR, and GT. Residues Cys-222, Cys-227, Cys-230, and Cys-246 each coordinate [2Fe-2S] cluster.

Belongs to the PyrK family. As to quaternary structure, heterotetramer of 2 PyrK and 2 PyrD type B subunits. [2Fe-2S] cluster is required as a cofactor. The cofactor is FAD.

Its pathway is pyrimidine metabolism; UMP biosynthesis via de novo pathway; orotate from (S)-dihydroorotate (NAD(+) route): step 1/1. Responsible for channeling the electrons from the oxidation of dihydroorotate from the FMN redox center in the PyrD type B subunit to the ultimate electron acceptor NAD(+). The polypeptide is Dihydroorotate dehydrogenase B (NAD(+)), electron transfer subunit (Shouchella clausii (strain KSM-K16) (Alkalihalobacillus clausii)).